Here is a 382-residue protein sequence, read N- to C-terminus: Deoxyhypusine synthase (382 aa).

Residues 108–112 (SNLIS), 134–136 (TAG), glutamate 140, and aspartate 257 contribute to the NAD(+) site. 139 to 140 (EE) serves as a coordination point for spermidine. Aspartate 262 contributes to the spermidine binding site. Position 304 (glycine 304) interacts with NAD(+). Position 309 (histidine 309) interacts with spermidine. 329-330 (TG) is an NAD(+) binding site. Residues 335 to 337 (GSD) and 344 to 350 (EAVSWGK) contribute to the spermidine site. Lysine 350 (nucleophile) is an active-site residue. Residue 363 to 364 (DV) participates in NAD(+) binding.

This sequence belongs to the deoxyhypusine synthase family. NAD(+) is required as a cofactor.

It carries out the reaction [eIF5A protein]-L-lysine + spermidine = [eIF5A protein]-deoxyhypusine + propane-1,3-diamine. Its pathway is protein modification; eIF5A hypusination. Its function is as follows. Catalyzes the NAD-dependent oxidative cleavage of spermidine and the subsequent transfer of the butylamine moiety of spermidine to the epsilon-amino group of a specific lysine residue of the eIF-5A precursor protein to form the intermediate deoxyhypusine residue. This Eremothecium gossypii (strain ATCC 10895 / CBS 109.51 / FGSC 9923 / NRRL Y-1056) (Yeast) protein is Deoxyhypusine synthase (DYS1).